A 365-amino-acid chain; its full sequence is PHD finger protein 6 (365 aa).

At Ser2 the chain carries N-acetylserine. 2 consecutive short sequence motifs (nuclear localization signal) follow at residues 13–16 (RQRK) and 129–133 (RKHKK). The C2HC pre-PHD-type 1 zinc finger occupies 14–52 (QRKCGFCKSNRDKECGQLLISENQKVAAHHKCMLFSSAL). The interval 14–132 (QRKCGFCKSN…IYMVYCRKHK (119 aa)) is extended PHD1 domain (ePHD1). The segment at 80 to 132 (LMCSLCHCPGATIGCDVKTCHRTYHYHCALHDKAQIREKPSQGIYMVYCRKHK) adopts a PHD-type 1 zinc-finger fold. Phosphoserine is present on residues Ser138, Ser145, and Ser155. The interval 139 to 211 (EADLEESFNE…RSSPSDTRPK (73 aa)) is disordered. The Nucleolar localization signal motif lies at 157 to 169 (KSKKKSRKGRPRK). Residues 157 to 171 (KSKKKSRKGRPRKTN) are compositionally biased toward basic residues. Residue Lys173 forms a Glycyl lysine isopeptide (Lys-Gly) (interchain with G-Cter in SUMO2) linkage. 2 positions are modified to phosphoserine: Ser183 and Ser199. Residues 209–249 (RPKCGFCHVGEEENQARGKLHIFNAKKAAAHYKCMLFSSGT) form a C2HC pre-PHD-type 2 zinc finger. An extended PHD2 domain (ePHD2) region spans residues 209-330 (RPKCGFCHVG…IYKLYCKNHS (122 aa)). Lys227 is covalently cross-linked (Glycyl lysine isopeptide (Lys-Gly) (interchain with G-Cter in SUMO2)). The PHD-type 2 zinc finger occupies 278 to 330 (MKCTLCSQPGATIGCEIKACVKTYHYHCGVQDKAKYIENMSRGIYKLYCKNHS). Residues 330-365 (SGNDERDEEDEERESKSRGKVEIDQQQLTQQQLNGN) form a disordered region. A compositionally biased stretch (basic and acidic residues) spans 342-352 (RESKSRGKVEI). Residues 354–365 (QQQLTQQQLNGN) show a composition bias toward low complexity. A Phosphothreonine modification is found at Thr358.

Interacts with UBTF. Interacts with the NuRD complex component RBBP4 (via the nucleolar localization motif), the interaction mediates transcriptional repression activity.

It is found in the nucleus. The protein localises to the nucleolus. It localises to the chromosome. The protein resides in the centromere. Its subcellular location is the kinetochore. Functionally, transcriptional regulator that associates with ribosomal RNA promoters and suppresses ribosomal RNA (rRNA) transcription. This chain is PHD finger protein 6 (PHF6), found in Bos taurus (Bovine).